Reading from the N-terminus, the 172-residue chain is Crossover junction endodeoxyribonuclease RuvC (172 aa).

Catalysis depends on residues aspartate 11, glutamate 70, and aspartate 142. The Mg(2+) site is built by aspartate 11, glutamate 70, and aspartate 142.

The protein belongs to the RuvC family. Homodimer which binds Holliday junction (HJ) DNA. The HJ becomes 2-fold symmetrical on binding to RuvC with unstacked arms; it has a different conformation from HJ DNA in complex with RuvA. In the full resolvosome a probable DNA-RuvA(4)-RuvB(12)-RuvC(2) complex forms which resolves the HJ. The cofactor is Mg(2+).

Its subcellular location is the cytoplasm. The enzyme catalyses Endonucleolytic cleavage at a junction such as a reciprocal single-stranded crossover between two homologous DNA duplexes (Holliday junction).. In terms of biological role, the RuvA-RuvB-RuvC complex processes Holliday junction (HJ) DNA during genetic recombination and DNA repair. Endonuclease that resolves HJ intermediates. Cleaves cruciform DNA by making single-stranded nicks across the HJ at symmetrical positions within the homologous arms, yielding a 5'-phosphate and a 3'-hydroxyl group; requires a central core of homology in the junction. The consensus cleavage sequence is 5'-(A/T)TT(C/G)-3'. Cleavage occurs on the 3'-side of the TT dinucleotide at the point of strand exchange. HJ branch migration catalyzed by RuvA-RuvB allows RuvC to scan DNA until it finds its consensus sequence, where it cleaves and resolves the cruciform DNA. The protein is Crossover junction endodeoxyribonuclease RuvC of Hydrogenovibrio crunogenus (strain DSM 25203 / XCL-2) (Thiomicrospira crunogena).